Here is a 323-residue protein sequence, read N- to C-terminus: Elongation factor P--(R)-beta-lysine ligase (323 aa).

74–76 (SPE) contacts substrate. ATP is bound by residues 98 to 100 (RNE) and asparagine 107. Tyrosine 116 serves as a coordination point for substrate. 242–243 (EL) is an ATP binding site. Glutamate 249 contacts substrate. Residue glycine 298 coordinates ATP.

This sequence belongs to the class-II aminoacyl-tRNA synthetase family. EpmA subfamily. As to quaternary structure, homodimer.

The enzyme catalyses D-beta-lysine + L-lysyl-[protein] + ATP = N(6)-((3R)-3,6-diaminohexanoyl)-L-lysyl-[protein] + AMP + diphosphate + H(+). Its function is as follows. With EpmB is involved in the beta-lysylation step of the post-translational modification of translation elongation factor P (EF-P). Catalyzes the ATP-dependent activation of (R)-beta-lysine produced by EpmB, forming a lysyl-adenylate, from which the beta-lysyl moiety is then transferred to the epsilon-amino group of a conserved specific lysine residue in EF-P. This chain is Elongation factor P--(R)-beta-lysine ligase, found in Vibrio atlanticus (strain LGP32) (Vibrio splendidus (strain Mel32)).